We begin with the raw amino-acid sequence, 293 residues long: Extracellular metalloprotease MGYG_00389 (293 aa).

The first 19 residues, 1–19, serve as a signal peptide directing secretion; it reads MRFSVFLPAIAALSSAVAA. N-linked (GlcNAc...) asparagine glycans are attached at residues asparagine 49 and asparagine 53. Residue histidine 184 coordinates Zn(2+). Glutamate 185 is an active-site residue. Position 188 (histidine 188) interacts with Zn(2+). Cysteines 223 and 249 form a disulfide. Residues 270–293 are disordered; that stretch reads GSGSGSVTRPRPKPPVLMDYEHRL.

Belongs to the peptidase M43B family.

Its subcellular location is the secreted. Functionally, secreted metalloproteinase that allows assimilation of proteinaceous substrates. Plays a pivotal role as a pathogenicity determinant during infections and contributes to the ability of the pathogen to persist within the mammalian host. In Arthroderma gypseum (strain ATCC MYA-4604 / CBS 118893) (Microsporum gypseum), this protein is Extracellular metalloprotease MGYG_00389.